The chain runs to 147 residues: Diaminohydroxyphosphoribosylamino-pyrimidine deaminase (147 aa).

The region spanning 1 to 123 (MNDIFYMKRA…YLKKHGICVK (123 aa)) is the CMP/dCMP-type deaminase domain. His-50 is a Zn(2+) binding site. Glu-52 acts as the Proton donor in catalysis. Cys-75 and Cys-84 together coordinate Zn(2+).

This sequence belongs to the cytidine and deoxycytidylate deaminase family. Zn(2+) is required as a cofactor.

The enzyme catalyses 2,5-diamino-6-hydroxy-4-(5-phosphoribosylamino)-pyrimidine + H2O + H(+) = 5-amino-6-(5-phospho-D-ribosylamino)uracil + NH4(+). It participates in cofactor biosynthesis; riboflavin biosynthesis; 5-amino-6-(D-ribitylamino)uracil from GTP: step 2/4. The chain is Diaminohydroxyphosphoribosylamino-pyrimidine deaminase (ribD1) from Buchnera aphidicola subsp. Acyrthosiphon pisum (strain APS) (Acyrthosiphon pisum symbiotic bacterium).